The following is a 359-amino-acid chain: Phospho-N-acetylmuramoyl-pentapeptide-transferase (359 aa).

The next 10 helical transmembrane spans lie at 26 to 46, 75 to 95, 97 to 117, 134 to 154, 166 to 186, 197 to 217, 233 to 253, 261 to 281, 286 to 306, and 336 to 356; these read TIYA…WLIR, GGVL…NLTI, YVWL…ADDY, LACE…KPGF, VLPD…VGAA, GLAI…AYFA, GVGE…GFLW, VFMG…LAIV, ILLA…IFQV, and KVIV…ISTL.

This sequence belongs to the glycosyltransferase 4 family. MraY subfamily. The cofactor is Mg(2+).

Its subcellular location is the cell inner membrane. The catalysed reaction is UDP-N-acetyl-alpha-D-muramoyl-L-alanyl-gamma-D-glutamyl-meso-2,6-diaminopimeloyl-D-alanyl-D-alanine + di-trans,octa-cis-undecaprenyl phosphate = di-trans,octa-cis-undecaprenyl diphospho-N-acetyl-alpha-D-muramoyl-L-alanyl-D-glutamyl-meso-2,6-diaminopimeloyl-D-alanyl-D-alanine + UMP. Its pathway is cell wall biogenesis; peptidoglycan biosynthesis. Its function is as follows. Catalyzes the initial step of the lipid cycle reactions in the biosynthesis of the cell wall peptidoglycan: transfers peptidoglycan precursor phospho-MurNAc-pentapeptide from UDP-MurNAc-pentapeptide onto the lipid carrier undecaprenyl phosphate, yielding undecaprenyl-pyrophosphoryl-MurNAc-pentapeptide, known as lipid I. The sequence is that of Phospho-N-acetylmuramoyl-pentapeptide-transferase from Syntrophus aciditrophicus (strain SB).